The primary structure comprises 273 residues: Probable ribosomal RNA small subunit methyltransferase A (273 aa).

Asn26, Leu28, Gly53, Glu74, Asp98, and Asn113 together coordinate S-adenosyl-L-methionine.

The protein belongs to the class I-like SAM-binding methyltransferase superfamily. rRNA adenine N(6)-methyltransferase family. RsmA subfamily.

It is found in the cytoplasm. Its function is as follows. Specifically dimethylates two adjacent adenosines in the loop of a conserved hairpin near the 3'-end of 16S rRNA in the 30S particle. May play a critical role in biogenesis of 30S subunits. The chain is Probable ribosomal RNA small subunit methyltransferase A from Methanothermobacter thermautotrophicus (strain ATCC 29096 / DSM 1053 / JCM 10044 / NBRC 100330 / Delta H) (Methanobacterium thermoautotrophicum).